Consider the following 147-residue polypeptide: Endoribonuclease YbeY (147 aa).

3 residues coordinate Zn(2+): histidine 111, histidine 115, and aspartate 121.

This sequence belongs to the endoribonuclease YbeY family. Requires Zn(2+) as cofactor.

It is found in the cytoplasm. Functionally, single strand-specific metallo-endoribonuclease involved in late-stage 70S ribosome quality control and in maturation of the 3' terminus of the 16S rRNA. This chain is Endoribonuclease YbeY, found in Amoebophilus asiaticus (strain 5a2).